Here is a 572-residue protein sequence, read N- to C-terminus: Moesin (572 aa).

Residues 1 to 294 enclose the FERM domain; the sequence is MPRGVAVRVT…GNHELYMRRR (294 aa). Disordered stretches follow at residues 444–508 and 523–544; these read SQER…SYLP and LQAM…QENI. Over residues 454-475 the composition is skewed to low complexity; the sequence is AQEAAAAQHAAQLAAQREAQQL. The segment covering 480 to 502 has biased composition (acidic residues); that stretch reads EGEEDEQDHELEVQQDDNDDLDD. The span at 525–544 shows a compositional bias: basic and acidic residues; the sequence is AMKDESKGEDRYDKIHQENI.

It localises to the cell membrane. Its subcellular location is the cytoplasm. It is found in the cytoskeleton. The protein resides in the cell projection. Its function is as follows. Probably involved in connections of major cytoskeletal structures to the plasma membrane. The chain is Moesin from Lytechinus variegatus (Green sea urchin).